The chain runs to 1655 residues: Protein scribble homolog (1655 aa).

The interval 1–818 is sufficient for targeting to adherens junction and to inhibit cell proliferation; it reads MLKCIPLWRC…MRVWRERMVE (818 aa). S37 is modified (phosphoserine). LRR repeat units lie at residues 37–58, 60–81, 83–104, 106–127, 129–150, 152–174, 175–197, 198–219, 221–243, 244–265, 267–288, 290–312, 313–334, 336–357, 359–381, and 382–402; these read SLEELLLDANQLRELPKPFFRL, NLRKLGLSDNEIQRLPPEVANF, QLVELDVSRNDIPEIPESIKFC, ALEIADFSGNPLSRLPDGFTQL, SLAHLALNDVSLQALPGDVGNL, NLVTLELRENLLKSLPASLSFLV, KLEQLDLGGNDLEVLPDTLGALP, NLRELWLDRNQLSALPPELGNL, RLVCLDVSENRLEELPAELGGLV, LLTDLLLSQNLLRRLPDGIGQL, QLSILKVDQNRLCEVTEAIGDC, NLSELILTENLLMALPRSLGKLT, KLTNLNVDRNHLEALPPEIGGC, ALSVLSLRDNRLAVLPPELAHT, ELHVLDVAGNRLQSLPFALTHLN, and LKALWLAENQAQPMLRFQTED. T378 carries the post-translational modification Phosphothreonine. Disordered stretches follow at residues 417–440, 459–606, and 628–702; these read PQQPPPSLEDAGQQGSLSETWSDA, DAEE…IRKD, and LLQG…VSAP. Residues 458-474 are a coiled coil; it reads EDAEEAAAEKRGLQRRA. Residue T475 is modified to Phosphothreonine. The segment covering 479–494 has biased composition (basic and acidic residues); that stretch reads SELKVMKRSIEGRRSE. S504 carries the post-translational modification Phosphoserine. Over residues 537-555 the composition is skewed to low complexity; the sequence is EGPSAEAQGGSQQEATTAG. 2 stretches are compositionally biased toward acidic residues: residues 556-565 and 660-694; these read GEEDAEEDYQ and EEEEEEEGSPQEEEEEEEEENRAEEEEASTEEEDK. Positions 656-701 form a coiled coil; sequence RAQKEEEEEEEGSPQEEEEEEEEENRAEEEEASTEEEDKEGAVVSA. Residue S688 is modified to Phosphoserine. A Phosphothreonine modification is found at T689. 2 positions are modified to phosphoserine: S708 and S764. The tract at residues 717-1229 is interaction with ARHGEF7; sequence IEPARIEEEE…SLESISSIDR (513 aa). Residues 728–815 enclose the PDZ 1 domain; it reads TLTILRQTGG…AVQMRVWRER (88 aa). The required for interaction with VIM stretch occupies residues 728 to 1194; it reads TLTILRQTGG…TVLVCDGFEA (467 aa). Position 826 is a phosphothreonine (T826). The interval 827 to 853 is disordered; that stretch reads PLRPEDDYSPRERRGGGLRLPLLPPES. Positions 829–841 are enriched in basic and acidic residues; it reads RPEDDYSPRERRG. Residues S835, S853, S875, and S939 each carry the phosphoserine modification. 3 consecutive PDZ domains span residues 862–950, 1004–1093, and 1100–1194; these read VACL…EREA, EIRL…RRDP, and ELCI…GFEA. The segment at 1105 to 1117 is interaction with tick-borne encephalitis virus RNA-directed RNA polymerase NS5; the sequence is KAPGERLGISIRG. 11 positions are modified to phosphoserine: S1140, S1220, S1223, S1226, S1232, S1276, S1279, S1295, S1298, S1306, and S1309. Positions 1227 to 1242 are enriched in basic and acidic residues; the sequence is IDRELSPEGPGKEKEL. Residues 1227–1246 are disordered; it reads IDRELSPEGPGKEKELPGQT. Residues 1277 to 1489 are disordered; it reads AGSVQRVPSG…APERALSPAE (213 aa). A compositionally biased stretch (pro residues) spans 1302-1311; the sequence is QQPPSPPSPD. Position 1342 is a phosphothreonine (T1342). Position 1348 is a phosphoserine (S1348). Over residues 1353–1365 the composition is skewed to basic and acidic residues; sequence SFRERQKYFELEV. S1378 is subject to Phosphoserine. Positions 1379 to 1419 form a coiled coil; sequence LVGADDLRKMQEEEARKLQQKRAQMLREAAEAGAEARLALD. A compositionally biased stretch (basic and acidic residues) spans 1383–1395; sequence DDLRKMQEEEARK. Positions 1409 to 1421 are enriched in low complexity; it reads EAGAEARLALDGE. Residues 1422–1432 show a composition bias toward acidic residues; it reads TLGEEEQEDEQ. A phosphoserine mark is found at S1437, S1445, and S1448. The span at 1461–1472 shows a compositional bias: basic and acidic residues; it reads AKAERRHQERLR. A phosphoserine mark is found at S1475, S1486, and S1508. A disordered region spans residues 1520–1568; the sequence is LSRSQEGRGTRGPLERLAEAPSPAPTPSPTPVEDLGPQTSTSPGRLPLS. The segment covering 1524–1537 has biased composition (basic and acidic residues); it reads QEGRGTRGPLERLA. At S1541 the chain carries Phosphoserine. At T1545 the chain carries Phosphothreonine. S1547, S1561, and S1591 each carry phosphoserine. A disordered region spans residues 1622-1655; sequence GRPSPGAVGPEDVALCSSRRPVRPGRRGLGPVPS.

The protein belongs to the LAP (LRR and PDZ) protein family. Interacts with UBE3A. Interacts with PAK1 and PAK2. Interacts (via PDZ domains) with VANGL2. Interacts (via PDZ domains) with LPP and TRIP6; the interaction is direct. Interacts (via PDZ domains) with TJP2. Interacts (via PDZ domains) with APC; may mediate APC targeting to adherens junctions of epithelial cells. Interacts (via PDZ domains) with TSHR; regulates TSHR trafficking and function. Interacts with ARHGEF7 and GIT1; interacts directly with ARHGEF7. Interacts with CTNNB1. Interacts with MAPK12. Interacts (via PDZ domains 1 and 3) with MCC. Interacts with DLG5. Interacts with STK4/MST1 and LATS1 in the presence of DLG5. Interacts (via PDZ domain 3) with CRTAM (via PDZ-binding motif); the interaction promotes CRTAM and SCRIB polarization in a subset of CD4+ T-cells. Interacts with YES1, when YES1 is in a closed conformation; the interaction facilitates YES1 autophosphorylation. Interacts (via PDZ domains) with VIM; the interaction protects SCRIB from proteasomal degradation and facilitates SCRIB localization to intermediate filaments, the interaction is reduced by cell contact inhibition. As to quaternary structure, (Microbial infection) Interacts (via fourth PDZ domain) with tick-borne encephalitis virus RNA-directed RNA polymerase NS5; this interaction targets viral NS5 to the cell membrane periphery and nucleus and prevents STAT1 phosphorylation, and thus, the activation of the JAK-STAT signaling pathway. Interacts with HPV E6. Interacts with influenza A virus protein NS1; the interaction results in the translocation of SCRIB from the cell membrane to perinuclear puncta. Ubiquitinated; targeted for UBE3A-dependent multiubiquitination in the presence of high-risk HPV E6 proteins and degraded. In terms of processing, palmitoylated. Could be depalmitoylated by LYPLA1 and/or LYPLA2. Palmitoylation of SCRIB by ZDHHC7 is required for its localization to cell-cell junctions, function in the establishement of epithelial cell polarity and the regulation of downstream signaling pathways important for epithelial cell differentiation. Expressed in kidney, skeletal muscles, liver, lung, breast, intestine, placenta and skin mainly in epithelial cells (at protein level).

The protein localises to the cell membrane. It localises to the cell junction. Its subcellular location is the adherens junction. It is found in the cell projection. The protein resides in the lamellipodium. The protein localises to the cytoplasm. It localises to the postsynapse. Its subcellular location is the presynapse. Functionally, scaffold protein involved in different aspects of polarized cell differentiation regulating epithelial and neuronal morphogenesis and T-cell polarization. Via its interaction with CRTAM, required for the late phase polarization of a subset of CD4+ T-cells, which in turn regulates TCR-mediated proliferation and IFNG and IL22 production. Plays a role in cell directional movement, cell orientation, cell sheet organization and Golgi complex polarization at the cell migration front. Promotes epithelial cell layer barrier function via maintaining cell-cell adhesion. Most probably functions in the establishment of apico-basal cell polarity. May function in cell proliferation regulating progression from G1 to S phase and as a positive regulator of apoptosis for instance during acinar morphogenesis of the mammary epithelium. May regulate cell invasion via MAPK-mediated cell migration and adhesion. May play a role in exocytosis and in the targeting of synaptic vesicles to synapses. Functions as an activator of Rac GTPase activity. The sequence is that of Protein scribble homolog from Homo sapiens (Human).